Reading from the N-terminus, the 159-residue chain is Large ribosomal subunit protein uL11 (159 aa).

The protein belongs to the universal ribosomal protein uL11 family. Part of the ribosomal stalk of the 50S ribosomal subunit. Interacts with L10 and the large rRNA to form the base of the stalk. L10 forms an elongated spine to which L12 dimers bind in a sequential fashion forming a multimeric L10(L12)X complex.

Its function is as follows. Forms part of the ribosomal stalk which helps the ribosome interact with GTP-bound translation factors. This chain is Large ribosomal subunit protein uL11, found in Methanococcus maripaludis (strain C6 / ATCC BAA-1332).